Consider the following 117-residue polypeptide: MPPKKDAKSSAKQPQKTQKKKEGSGGGKAKKKKWSKGKVRDKLNNQVLFDKATYEKLYKEVPAYKLITPSVVSERLKIRGSLAKRALIELREKGLIKQVVQHHSQVIYTRATKGDEA.

Positions 1 to 38 are disordered; it reads MPPKKDAKSSAKQPQKTQKKKEGSGGGKAKKKKWSKGK. Residues 28 to 37 are compositionally biased toward basic residues; sequence KAKKKKWSKG.

The protein belongs to the eukaryotic ribosomal protein eS25 family.

This is Small ribosomal subunit protein eS25 (RpS25) from Drosophila melanogaster (Fruit fly).